The sequence spans 130 residues: Small ribosomal subunit protein uS9 (130 aa).

The disordered stretch occupies residues 105–130 (TRDARMKERKKPGLKKARKASQFSKR). The segment covering 111 to 130 (KERKKPGLKKARKASQFSKR) has biased composition (basic residues).

The protein belongs to the universal ribosomal protein uS9 family.

The chain is Small ribosomal subunit protein uS9 from Lactiplantibacillus plantarum (strain ATCC BAA-793 / NCIMB 8826 / WCFS1) (Lactobacillus plantarum).